We begin with the raw amino-acid sequence, 346 residues long: Holliday junction branch migration complex subunit RuvB (346 aa).

Residues 1–183 form a large ATPase domain (RuvB-L) region; sequence MTEQRIIASS…FGIVQRLEFY (183 aa). ATP contacts are provided by residues Ile22, Arg23, Gly64, Lys67, Thr68, Thr69, 130 to 132, Arg173, Tyr183, and Arg220; that span reads EDF. Mg(2+) is bound at residue Thr68. Positions 184–254 are small ATPAse domain (RuvB-S); it reads SPQELTRIVI…VAQAAMQMLK (71 aa). The head domain (RuvB-H) stretch occupies residues 257–346; it reads PEGFDELDRR…PGIGEPGDLF (90 aa). 3 residues coordinate DNA: Arg293, Arg312, and Arg317.

It belongs to the RuvB family. In terms of assembly, homohexamer. Forms an RuvA(8)-RuvB(12)-Holliday junction (HJ) complex. HJ DNA is sandwiched between 2 RuvA tetramers; dsDNA enters through RuvA and exits via RuvB. An RuvB hexamer assembles on each DNA strand where it exits the tetramer. Each RuvB hexamer is contacted by two RuvA subunits (via domain III) on 2 adjacent RuvB subunits; this complex drives branch migration. In the full resolvosome a probable DNA-RuvA(4)-RuvB(12)-RuvC(2) complex forms which resolves the HJ.

The protein localises to the cytoplasm. The enzyme catalyses ATP + H2O = ADP + phosphate + H(+). The RuvA-RuvB-RuvC complex processes Holliday junction (HJ) DNA during genetic recombination and DNA repair, while the RuvA-RuvB complex plays an important role in the rescue of blocked DNA replication forks via replication fork reversal (RFR). RuvA specifically binds to HJ cruciform DNA, conferring on it an open structure. The RuvB hexamer acts as an ATP-dependent pump, pulling dsDNA into and through the RuvAB complex. RuvB forms 2 homohexamers on either side of HJ DNA bound by 1 or 2 RuvA tetramers; 4 subunits per hexamer contact DNA at a time. Coordinated motions by a converter formed by DNA-disengaged RuvB subunits stimulates ATP hydrolysis and nucleotide exchange. Immobilization of the converter enables RuvB to convert the ATP-contained energy into a lever motion, pulling 2 nucleotides of DNA out of the RuvA tetramer per ATP hydrolyzed, thus driving DNA branch migration. The RuvB motors rotate together with the DNA substrate, which together with the progressing nucleotide cycle form the mechanistic basis for DNA recombination by continuous HJ branch migration. Branch migration allows RuvC to scan DNA until it finds its consensus sequence, where it cleaves and resolves cruciform DNA. This chain is Holliday junction branch migration complex subunit RuvB, found in Xanthomonas axonopodis pv. citri (strain 306).